The chain runs to 275 residues: MAASFSSTAPTTPVLRFRANYSKPLLSLPDSCLRIISSAISPSTRLIACSFKTDKLPLGAGVNLSGGPVVKRSLQKRLVIRSATIEEIEAEKSAIETDVKSKMEKTIETLRTSFNSIRTGRSNAAMLDKIEVEYYGSPVSLKSIAQISTPDGSSLLLQPYDKSSLKAIEKAIVNSDLGVTPNNDGDVIRLSLPPLTSDRRKELSKVVAKQSEEGKVALRNIRRDALKSYDKLEKEKKLSEDNVKDLSSDLQKLIDVYMKKIEELYKQKEKELMKV.

Residues 1–82 constitute a chloroplast transit peptide; the sequence is MAASFSSTAP…SLQKRLVIRS (82 aa). Residues 215–271 are a coiled coil; sequence KVALRNIRRDALKSYDKLEKEKKLSEDNVKDLSSDLQKLIDVYMKKIEELYKQKEKE.

Belongs to the RRF family.

The protein resides in the plastid. It localises to the chloroplast. In terms of biological role, responsible for the release of ribosomes from messenger RNA at the termination of chloroplastic protein biosynthesis. This Arabidopsis thaliana (Mouse-ear cress) protein is Ribosome-recycling factor, chloroplastic (RRF).